We begin with the raw amino-acid sequence, 768 residues long: Lon protease (768 aa).

Positions 4-198 (APFLPIRDLV…RILDEIVAEM (195 aa)) constitute a Lon N-terminal domain. ATP is bound at residue 349-356 (GPPGIGKT). The region spanning 586-768 (TGKIGVVNGL…DDVSKLVFVK (183 aa)) is the Lon proteolytic domain. Active-site residues include Ser674 and Lys717.

The protein belongs to the peptidase S16 family. In terms of assembly, homohexamer. Organized in a ring with a central cavity.

It localises to the cytoplasm. The catalysed reaction is Hydrolysis of proteins in presence of ATP.. In terms of biological role, ATP-dependent serine protease that mediates the selective degradation of mutant and abnormal proteins as well as certain short-lived regulatory proteins. Required for cellular homeostasis and for survival from DNA damage and developmental changes induced by stress. Degrades polypeptides processively to yield small peptide fragments that are 5 to 10 amino acids long. Binds to DNA in a double-stranded, site-specific manner. This chain is Lon protease, found in Fusobacterium nucleatum subsp. nucleatum (strain ATCC 25586 / DSM 15643 / BCRC 10681 / CIP 101130 / JCM 8532 / KCTC 2640 / LMG 13131 / VPI 4355).